A 496-amino-acid polypeptide reads, in one-letter code: UDP-N-acetylmuramate--L-alanine ligase (496 aa).

Gly122 to Thr128 lines the ATP pocket.

The protein belongs to the MurCDEF family.

The protein resides in the cytoplasm. It catalyses the reaction UDP-N-acetyl-alpha-D-muramate + L-alanine + ATP = UDP-N-acetyl-alpha-D-muramoyl-L-alanine + ADP + phosphate + H(+). It functions in the pathway cell wall biogenesis; peptidoglycan biosynthesis. In terms of biological role, cell wall formation. In Mycobacterium avium (strain 104), this protein is UDP-N-acetylmuramate--L-alanine ligase.